A 346-amino-acid chain; its full sequence is Uroporphyrinogen decarboxylase (346 aa).

Substrate-binding positions include Arg21–Arg25, Asp71, Tyr146, Ser201, and His316.

The protein belongs to the uroporphyrinogen decarboxylase family. Homodimer.

It localises to the cytoplasm. The catalysed reaction is uroporphyrinogen III + 4 H(+) = coproporphyrinogen III + 4 CO2. It participates in porphyrin-containing compound metabolism; protoporphyrin-IX biosynthesis; coproporphyrinogen-III from 5-aminolevulinate: step 4/4. Catalyzes the decarboxylation of four acetate groups of uroporphyrinogen-III to yield coproporphyrinogen-III. In Rickettsia africae (strain ESF-5), this protein is Uroporphyrinogen decarboxylase.